An 823-amino-acid chain; its full sequence is Leucine--tRNA ligase (823 aa).

The 'HIGH' region motif lies at 42–52 (PYPSGTLHMGH). The short motif at 575 to 579 (KMSKS) is the 'KMSKS' region element. Lys-578 lines the ATP pocket.

It belongs to the class-I aminoacyl-tRNA synthetase family.

It is found in the cytoplasm. The enzyme catalyses tRNA(Leu) + L-leucine + ATP = L-leucyl-tRNA(Leu) + AMP + diphosphate. This chain is Leucine--tRNA ligase, found in Legionella pneumophila subsp. pneumophila (strain Philadelphia 1 / ATCC 33152 / DSM 7513).